The sequence spans 272 residues: F-box protein PP2-B10 (272 aa).

Positions 11–57 (SSPFDSFPEDCISYIISFTNPRDACVAATVSKTFESTVKSDIIWEKF) constitute an F-box domain.

As to quaternary structure, part of a SCF (ASK-cullin-F-box) protein ligase complex. Interacts with SKP1B/ASK2, ASK11 and ASK12.

It functions in the pathway protein modification; protein ubiquitination. Functionally, component of SCF(ASK-cullin-F-box) E3 ubiquitin ligase complexes, which may mediate the ubiquitination and subsequent proteasomal degradation of target proteins. The chain is F-box protein PP2-B10 (PP2B10) from Arabidopsis thaliana (Mouse-ear cress).